We begin with the raw amino-acid sequence, 592 residues long: Aspartate--tRNA(Asp/Asn) ligase (592 aa).

Glutamate 173 lines the L-aspartate pocket. The tract at residues 197 to 200 (QLFK) is aspartate. Residue arginine 219 participates in L-aspartate binding. Residues 219–221 (RDE) and glutamine 228 each bind ATP. Histidine 451 contacts L-aspartate. Glutamate 486 provides a ligand contact to ATP. Arginine 493 provides a ligand contact to L-aspartate. Residue 538–541 (GLDR) participates in ATP binding.

It belongs to the class-II aminoacyl-tRNA synthetase family. Type 1 subfamily. As to quaternary structure, homodimer.

The protein resides in the cytoplasm. It carries out the reaction tRNA(Asx) + L-aspartate + ATP = L-aspartyl-tRNA(Asx) + AMP + diphosphate. In terms of biological role, aspartyl-tRNA synthetase with relaxed tRNA specificity since it is able to aspartylate not only its cognate tRNA(Asp) but also tRNA(Asn). Reaction proceeds in two steps: L-aspartate is first activated by ATP to form Asp-AMP and then transferred to the acceptor end of tRNA(Asp/Asn). The chain is Aspartate--tRNA(Asp/Asn) ligase from Alkalilimnicola ehrlichii (strain ATCC BAA-1101 / DSM 17681 / MLHE-1).